A 236-amino-acid chain; its full sequence is MRMRITAILAAGLLAGCQNQAFNEIGRAPAMSPIGSGLQYTQTPQLAMYPKQPRHVTNGYSLWNDQQAALFKDARAINIGDILTVDIRIDDKASFENETDRSRKNSSGFNLGASGESQTSDFAWSGDLEYGSNTKTEGDGKTERSEKLRLLVAAVVTGVLENGNLLISGSQEVRVNHELRILNVAGIVRPRDVDADNVISYDRIAEARISYGGRGRLTEVQQPPWGQQLVDLVSPL.

The signal sequence occupies residues 1 to 16 (MRMRITAILAAGLLAG). Cysteine 17 is lipidated: N-palmitoyl cysteine. A lipid anchor (S-diacylglycerol cysteine) is attached at cysteine 17. A disordered region spans residues 96-143 (ENETDRSRKNSSGFNLGASGESQTSDFAWSGDLEYGSNTKTEGDGKTE). Residues 105–122 (NSSGFNLGASGESQTSDF) show a composition bias toward polar residues.

The protein belongs to the FlgH family. The basal body constitutes a major portion of the flagellar organelle and consists of four rings (L,P,S, and M) mounted on a central rod.

It is found in the cell outer membrane. It localises to the bacterial flagellum basal body. Functionally, assembles around the rod to form the L-ring and probably protects the motor/basal body from shearing forces during rotation. The chain is Flagellar L-ring protein from Sinorhizobium medicae (strain WSM419) (Ensifer medicae).